The sequence spans 242 residues: Response regulator GtcR (242 aa).

The 114-residue stretch at 4 to 117 (TILIADDEPE…EAVARIQAQL (114 aa)) folds into the Response regulatory domain. Asp53 carries the 4-aspartylphosphate modification. The ompR/PhoB-type DNA-binding region spans 133-233 (TQSTTVGRLT…VRGLGYKFAS (101 aa)).

Phosphorylated by GtcS.

In terms of biological role, member of the two-component regulatory system GtcS/GtcR which may act in the control of the transcription of the grs operon which encodes the multienzymes involved in the biosynthesis of the peptide antibiotic gramicidin S. The sequence is that of Response regulator GtcR (gtcR) from Aneurinibacillus migulanus (Bacillus migulanus).